Consider the following 134-residue polypeptide: Small ribosomal subunit protein uS11 (134 aa).

The protein belongs to the universal ribosomal protein uS11 family. As to quaternary structure, part of the 30S ribosomal subunit. Interacts with proteins S7 and S18. Binds to IF-3.

Located on the platform of the 30S subunit, it bridges several disparate RNA helices of the 16S rRNA. Forms part of the Shine-Dalgarno cleft in the 70S ribosome. The protein is Small ribosomal subunit protein uS11 of Frankia casuarinae (strain DSM 45818 / CECT 9043 / HFP020203 / CcI3).